The chain runs to 449 residues: MAELISKEGNKVSFRVAVPAAEVNRAYDQVWAGLARDVRVPGFRPGKAPRKVLESRVGKGYVENEVRDRLLQVHYPQAARELKLSLVDARIEPEPLVSGQPFSFTVRGETYPEVTLGDWRAVQLTATAPEITDEVLNRTLSDLQERNATFQTVERPIEATDQVTIEELGEEGGSYPVYLDVAEPHVRDALIGKNVGDEVEITVPAHQHGDHEHPEHTVRVRVQSVQTKQLQPLDDEFARSLNFESLDRLRTDLRAELERRARQEGDAARREEFVNQLVEGMQVEIPQALIDRRREAMLEEIQDDLGRQGVKWSEYENFMREQGKLDEFLSDLAKNAESRVKRDLALEKLAEDLGVQLSDAEFSNTMNALAQANGLTPQQLQRQLGPNGINAYYISLTREKALQQALATLNGQQVAGRQEAGAEQTAQAAEQESGQPQAEGEQAAEQRGE.

Residues 160–231 (TDQVTIEELG…VQSVQTKQLQ (72 aa)) enclose the PPIase FKBP-type domain. Residues 411-449 (GQQVAGRQEAGAEQTAQAAEQESGQPQAEGEQAAEQRGE) are disordered. A compositionally biased stretch (low complexity) spans 415–443 (AGRQEAGAEQTAQAAEQESGQPQAEGEQA).

This sequence belongs to the FKBP-type PPIase family. Tig subfamily.

The protein localises to the cytoplasm. The catalysed reaction is [protein]-peptidylproline (omega=180) = [protein]-peptidylproline (omega=0). Functionally, involved in protein export. Acts as a chaperone by maintaining the newly synthesized protein in an open conformation. Functions as a peptidyl-prolyl cis-trans isomerase. This is Trigger factor from Deinococcus geothermalis (strain DSM 11300 / CIP 105573 / AG-3a).